The sequence spans 754 residues: 5-methyltetrahydropteroyltriglutamate--homocysteine methyltransferase (754 aa).

5-methyltetrahydropteroyltri-L-glutamate-binding positions include 17–20 and Lys117; that span reads RELK. Residues 431 to 433 and Glu484 each bind L-homocysteine; that span reads IGS. L-methionine is bound by residues 431 to 433 and Glu484; that span reads IGS. 5-methyltetrahydropteroyltri-L-glutamate is bound by residues 515–516 and Trp561; that span reads RC. Asp599 serves as a coordination point for L-homocysteine. Asp599 is a binding site for L-methionine. Glu605 contributes to the 5-methyltetrahydropteroyltri-L-glutamate binding site. Positions 641, 643, and 665 each coordinate Zn(2+). The active-site Proton donor is His694. Cys726 contacts Zn(2+).

Belongs to the vitamin-B12 independent methionine synthase family. Zn(2+) is required as a cofactor.

It catalyses the reaction 5-methyltetrahydropteroyltri-L-glutamate + L-homocysteine = tetrahydropteroyltri-L-glutamate + L-methionine. The protein operates within amino-acid biosynthesis; L-methionine biosynthesis via de novo pathway; L-methionine from L-homocysteine (MetE route): step 1/1. Catalyzes the transfer of a methyl group from 5-methyltetrahydrofolate to homocysteine resulting in methionine formation. The chain is 5-methyltetrahydropteroyltriglutamate--homocysteine methyltransferase from Salmonella newport (strain SL254).